Consider the following 259-residue polypeptide: L-cystine import ATP-binding protein TcyN (259 aa).

Residues 2 to 239 (IEIKNIHKQF…TKKDRTRQFL (238 aa)) form the ABC transporter domain. ATP is bound at residue 34–41 (GPSGSGKT).

This sequence belongs to the ABC transporter superfamily. L-cystine importer (TC 3.A.1.3.13) family. As to quaternary structure, the complex is composed of two ATP-binding proteins (TcyN), two transmembrane proteins (TcyL and TcyM) and two solute-binding proteins (TcyJ and TcyK).

It localises to the cell membrane. Functionally, part of the ABC transporter complex TcyJKLMN involved in L-cystine import. Responsible for energy coupling to the transport system. Is also involved in cystathionine, djenkolate, and S-methylcysteine transport. This Bacillus subtilis (strain 168) protein is L-cystine import ATP-binding protein TcyN (tcyN).